A 362-amino-acid polypeptide reads, in one-letter code: MSPPDRPQRLVEQDRIGGDAAEASIRPLSLAEFIGQRQVRENLSVFIQAARGRKEALDHVLLFGPPGLGKTTLAQIVAKELNVGFRATSGPVIAKAGDLAALLTNLQPHDVLFIDEIHRLSPAVEEILYPAMEDFQLDLIIGEGPAARSVRIDLPPFTLVGATTRSGLITRPLRERFGIPLRMQFYEPEELQLIVARGARILGMELTGEGALEIARRSRGTPRVAGRLLRRVRDICGVAGLAVVDAAAAGGALTRLEVDRLGFDAMDRRYLRCIADNYGGGPVGVETLGAALGEQRDVLEETIEPYLIQQGLLQRTPRGRLLTDSGYRYLGLPPPATPARQLDLLGGAGPGGGTPEGEGEDV.

Residues 4 to 186 (PDRPQRLVEQ…FGIPLRMQFY (183 aa)) form a large ATPase domain (RuvB-L) region. Residues Ile25, Arg26, Gly67, Lys70, Thr71, Thr72, 133-135 (EDF), Arg176, Tyr186, and Arg223 contribute to the ATP site. Thr71 is a binding site for Mg(2+). Residues 187–257 (EPEELQLIVA…AAGGALTRLE (71 aa)) form a small ATPAse domain (RuvB-S) region. Residues 260–362 (RLGFDAMDRR…GTPEGEGEDV (103 aa)) form a head domain (RuvB-H) region. Residues Arg296, Arg315, and Arg320 each contribute to the DNA site.

The protein belongs to the RuvB family. As to quaternary structure, homohexamer. Forms an RuvA(8)-RuvB(12)-Holliday junction (HJ) complex. HJ DNA is sandwiched between 2 RuvA tetramers; dsDNA enters through RuvA and exits via RuvB. An RuvB hexamer assembles on each DNA strand where it exits the tetramer. Each RuvB hexamer is contacted by two RuvA subunits (via domain III) on 2 adjacent RuvB subunits; this complex drives branch migration. In the full resolvosome a probable DNA-RuvA(4)-RuvB(12)-RuvC(2) complex forms which resolves the HJ.

It localises to the cytoplasm. It catalyses the reaction ATP + H2O = ADP + phosphate + H(+). The RuvA-RuvB-RuvC complex processes Holliday junction (HJ) DNA during genetic recombination and DNA repair, while the RuvA-RuvB complex plays an important role in the rescue of blocked DNA replication forks via replication fork reversal (RFR). RuvA specifically binds to HJ cruciform DNA, conferring on it an open structure. The RuvB hexamer acts as an ATP-dependent pump, pulling dsDNA into and through the RuvAB complex. RuvB forms 2 homohexamers on either side of HJ DNA bound by 1 or 2 RuvA tetramers; 4 subunits per hexamer contact DNA at a time. Coordinated motions by a converter formed by DNA-disengaged RuvB subunits stimulates ATP hydrolysis and nucleotide exchange. Immobilization of the converter enables RuvB to convert the ATP-contained energy into a lever motion, pulling 2 nucleotides of DNA out of the RuvA tetramer per ATP hydrolyzed, thus driving DNA branch migration. The RuvB motors rotate together with the DNA substrate, which together with the progressing nucleotide cycle form the mechanistic basis for DNA recombination by continuous HJ branch migration. Branch migration allows RuvC to scan DNA until it finds its consensus sequence, where it cleaves and resolves cruciform DNA. The polypeptide is Holliday junction branch migration complex subunit RuvB (Rhodospirillum centenum (strain ATCC 51521 / SW)).